We begin with the raw amino-acid sequence, 615 residues long: Proteasome-associated ATPase (615 aa).

Positions 1–13 (MSESQRHEAREDG) are enriched in basic and acidic residues. The tract at residues 1–32 (MSESQRHEAREDGFTTPHESGLSSEDAAELEE) is disordered. Positions 22–100 (LSSEDAAELE…LREEVDRLGQ (79 aa)) form a coiled coil. 302–307 (GCGKTL) is an ATP binding site. A docks into pockets in the proteasome alpha-ring region spans residues 614-615 (YL).

The protein belongs to the AAA ATPase family. Homohexamer. Assembles into a hexameric ring structure that caps the 20S proteasome core. Strongly interacts with the prokaryotic ubiquitin-like protein Pup through a hydrophobic interface; the interacting region of ARC lies in its N-terminal coiled-coil domain. There is one Pup binding site per ARC hexamer ring. Upon ATP-binding, the C-terminus of ARC interacts with the alpha-rings of the proteasome core, possibly by binding to the intersubunit pockets.

It participates in protein degradation; proteasomal Pup-dependent pathway. ATPase which is responsible for recognizing, binding, unfolding and translocation of pupylated proteins into the bacterial 20S proteasome core particle. May be essential for opening the gate of the 20S proteasome via an interaction with its C-terminus, thereby allowing substrate entry and access to the site of proteolysis. Thus, the C-termini of the proteasomal ATPase may function like a 'key in a lock' to induce gate opening and therefore regulate proteolysis. The protein is Proteasome-associated ATPase of Mycobacterium sp. (strain JLS).